We begin with the raw amino-acid sequence, 190 residues long: Adenine phosphoribosyltransferase (190 aa).

This sequence belongs to the purine/pyrimidine phosphoribosyltransferase family. As to quaternary structure, homodimer.

It localises to the cytoplasm. It carries out the reaction AMP + diphosphate = 5-phospho-alpha-D-ribose 1-diphosphate + adenine. It participates in purine metabolism; AMP biosynthesis via salvage pathway; AMP from adenine: step 1/1. Functionally, catalyzes a salvage reaction resulting in the formation of AMP, that is energically less costly than de novo synthesis. The polypeptide is Adenine phosphoribosyltransferase (Treponema pallidum (strain Nichols)).